The following is a 419-amino-acid chain: 3-isopropylmalate dehydratase large subunit (419 aa).

Residues C300, C360, and C363 each contribute to the [4Fe-4S] cluster site.

Belongs to the aconitase/IPM isomerase family. LeuC type 2 subfamily. In terms of assembly, heterodimer of LeuC and LeuD. [4Fe-4S] cluster is required as a cofactor.

The catalysed reaction is (2R,3S)-3-isopropylmalate = (2S)-2-isopropylmalate. It participates in amino-acid biosynthesis; L-leucine biosynthesis; L-leucine from 3-methyl-2-oxobutanoate: step 2/4. Catalyzes the isomerization between 2-isopropylmalate and 3-isopropylmalate, via the formation of 2-isopropylmaleate. The polypeptide is 3-isopropylmalate dehydratase large subunit (Nitratidesulfovibrio vulgaris (strain DP4) (Desulfovibrio vulgaris)).